The chain runs to 473 residues: Glutamate--tRNA ligase (473 aa).

The 'HIGH' region signature appears at 11-21; the sequence is PSPTGFLHIGG. The 'KMSKS' region motif lies at 240-244; the sequence is KLSKR. Lys243 provides a ligand contact to ATP.

The protein belongs to the class-I aminoacyl-tRNA synthetase family. Glutamate--tRNA ligase type 1 subfamily. In terms of assembly, monomer.

The protein resides in the cytoplasm. It carries out the reaction tRNA(Glu) + L-glutamate + ATP = L-glutamyl-tRNA(Glu) + AMP + diphosphate. Catalyzes the attachment of glutamate to tRNA(Glu) in a two-step reaction: glutamate is first activated by ATP to form Glu-AMP and then transferred to the acceptor end of tRNA(Glu). The protein is Glutamate--tRNA ligase of Afipia carboxidovorans (strain ATCC 49405 / DSM 1227 / KCTC 32145 / OM5) (Oligotropha carboxidovorans).